Reading from the N-terminus, the 482-residue chain is MKFIIKLFPEITIKSQSVRLRFIKILTGNIRNVLKHYDETLAVVRHWDNIEVRAKDESQRLAIRDALTRIPGIHHILEVEDVPFTDMHDIFEKALVQYRDQLEGKTFCVRVKRRGKHDFSSIDVERYVGGGLNQHIESARVKLTNPDVTVHLEVEDDRLLLIKGRYEGIGGFPIGTQEDVLSLISGGFDSGVSSYMLMRRGCRVHYCFFNLGGAAHEIGVRQVAHYLWNRFGSSHRVRFVAINFEPVVGEILEKIDDGQMGVILKRMMVRAASKVAERYGVQALVTGEALGQVSSQTLTNLRLIDNVSDTLILRPLISYDKEHIINLARQIGTEDFARTMPEYCGVISKSPTVKAVKSKIEAEEEKFDFSILDKVVEEANNVDIREIAQQTEQEVVEVETVNGFGPNDVILDIRSVDEQEDKPLRVEGIDVVSLPFYKLSTKFGDLDQNKTWLLWCERGVMSRLQALYLREQGFNNVKVYRP.

The THUMP domain occupies 61–165 (LAIRDALTRI…DDRLLLIKGR (105 aa)). Residues 183 to 184 (LI), lysine 265, glycine 287, and glutamine 296 each bind ATP. Cysteine 344 and cysteine 456 are oxidised to a cystine. Positions 404-482 (FGPNDVILDI…GFNNVKVYRP (79 aa)) constitute a Rhodanese domain. Residue cysteine 456 is the Cysteine persulfide intermediate of the active site.

Belongs to the ThiI family.

It is found in the cytoplasm. It catalyses the reaction [ThiI sulfur-carrier protein]-S-sulfanyl-L-cysteine + a uridine in tRNA + 2 reduced [2Fe-2S]-[ferredoxin] + ATP + H(+) = [ThiI sulfur-carrier protein]-L-cysteine + a 4-thiouridine in tRNA + 2 oxidized [2Fe-2S]-[ferredoxin] + AMP + diphosphate. The enzyme catalyses [ThiS sulfur-carrier protein]-C-terminal Gly-Gly-AMP + S-sulfanyl-L-cysteinyl-[cysteine desulfurase] + AH2 = [ThiS sulfur-carrier protein]-C-terminal-Gly-aminoethanethioate + L-cysteinyl-[cysteine desulfurase] + A + AMP + 2 H(+). Its pathway is cofactor biosynthesis; thiamine diphosphate biosynthesis. Its function is as follows. Catalyzes the ATP-dependent transfer of a sulfur to tRNA to produce 4-thiouridine in position 8 of tRNAs, which functions as a near-UV photosensor. Also catalyzes the transfer of sulfur to the sulfur carrier protein ThiS, forming ThiS-thiocarboxylate. This is a step in the synthesis of thiazole, in the thiamine biosynthesis pathway. The sulfur is donated as persulfide by IscS. The chain is tRNA sulfurtransferase from Escherichia fergusonii (strain ATCC 35469 / DSM 13698 / CCUG 18766 / IAM 14443 / JCM 21226 / LMG 7866 / NBRC 102419 / NCTC 12128 / CDC 0568-73).